Here is a 397-residue protein sequence, read N- to C-terminus: Tryptophan synthase beta chain (397 aa).

K86 is subject to N6-(pyridoxal phosphate)lysine.

This sequence belongs to the TrpB family. Tetramer of two alpha and two beta chains. It depends on pyridoxal 5'-phosphate as a cofactor.

The catalysed reaction is (1S,2R)-1-C-(indol-3-yl)glycerol 3-phosphate + L-serine = D-glyceraldehyde 3-phosphate + L-tryptophan + H2O. It functions in the pathway amino-acid biosynthesis; L-tryptophan biosynthesis; L-tryptophan from chorismate: step 5/5. In terms of biological role, the beta subunit is responsible for the synthesis of L-tryptophan from indole and L-serine. This Aeromonas hydrophila subsp. hydrophila (strain ATCC 7966 / DSM 30187 / BCRC 13018 / CCUG 14551 / JCM 1027 / KCTC 2358 / NCIMB 9240 / NCTC 8049) protein is Tryptophan synthase beta chain.